Consider the following 451-residue polypeptide: Aspartate aminotransferase, mitochondrial (451 aa).

L-aspartate is bound by residues G52, W155, and N216. K286 is modified (N6-(pyridoxal phosphate)lysine). R423 contacts L-aspartate.

Belongs to the class-I pyridoxal-phosphate-dependent aminotransferase family. Homodimer. Requires pyridoxal 5'-phosphate as cofactor.

It localises to the mitochondrion matrix. It carries out the reaction L-aspartate + 2-oxoglutarate = oxaloacetate + L-glutamate. Plays a key role in amino acid metabolism. Important for metabolite exchange between mitochondria and cytosol. This Saccharomyces cerevisiae (strain ATCC 204508 / S288c) (Baker's yeast) protein is Aspartate aminotransferase, mitochondrial (AAT1).